The chain runs to 467 residues: Neuromedin-K receptor (467 aa).

Topologically, residues 1–86 are extracellular; that stretch reads MDSFAAAETW…TNQFVQPSWR (86 aa). 3 N-linked (GlcNAc...) asparagine glycosylation sites follow: Asn-23, Asn-50, and Asn-75. Residues 87–109 form a helical membrane-spanning segment; that stretch reads IALWSLAYGVVVAVAVFGNLIVI. Topologically, residues 110–119 are cytoplasmic; it reads WIILAHKRMR. A helical transmembrane segment spans residues 120–141; it reads TVTNYFLVNLAFSDASMAAFNT. The Extracellular segment spans residues 142–161; that stretch reads LVNFIYALHSEWYFGANYCR. A disulfide bridge connects residues Cys-160 and Cys-235. Residues 162 to 183 form a helical membrane-spanning segment; it reads FQNFFPITAVFASIYSMTAIAV. Residues 184-203 lie on the Cytoplasmic side of the membrane; it reads DRYMAIIDPLKPRLSATATK. Residues 204 to 224 traverse the membrane as a helical segment; that stretch reads IVIGSIWILAFLLALPQCLYS. At 225 to 247 the chain is on the extracellular side; that stretch reads KTKVMPGRTLCYVQWPEGPKQHF. The chain crosses the membrane as a helical span at residues 248–272; the sequence is IYHIIVIILVYCFPLLIMGITYTIV. Over 273 to 301 the chain is Cytoplasmic; the sequence is GITLWGGEIPGDTCDKYHEQLKAKRKVVK. Residues 302–323 traverse the membrane as a helical segment; sequence MMIIVVVTFAICWLPYHIYFIL. Over 324–336 the chain is Extracellular; the sequence is TAIYQQLNRWKYI. The helical transmembrane segment at 337–361 threads the bilayer; sequence QQVYLASFWLAMSSTMYNPIIYCCL. The Cytoplasmic portion of the chain corresponds to 362-467; sequence NKRFRAGFKR…SPYTSMEEYS (106 aa). Cys-376 carries S-palmitoyl cysteine lipidation. The segment at 416-467 is disordered; that stretch reads DPSDADNTRSSRKKRATPGDPNFNGCSRRNSKSASTTSSFISSPYTSMEEYS. The span at 447-467 shows a compositional bias: low complexity; sequence KSASTTSSFISSPYTSMEEYS.

Belongs to the G-protein coupled receptor 1 family.

It localises to the cell membrane. This is a receptor for the tachykinin neuropeptide neuromedin-K (neurokinin B). It is associated with G proteins that activate a phosphatidylinositol-calcium second messenger system. The sequence is that of Neuromedin-K receptor (TACR3) from Oryctolagus cuniculus (Rabbit).